The sequence spans 256 residues: Trans-aconitate 2-methyltransferase (256 aa).

This sequence belongs to the methyltransferase superfamily. Tam family.

The protein resides in the cytoplasm. It catalyses the reaction trans-aconitate + S-adenosyl-L-methionine = (E)-3-(methoxycarbonyl)pent-2-enedioate + S-adenosyl-L-homocysteine. Catalyzes the S-adenosylmethionine monomethyl esterification of trans-aconitate. In Afipia carboxidovorans (strain ATCC 49405 / DSM 1227 / KCTC 32145 / OM5) (Oligotropha carboxidovorans), this protein is Trans-aconitate 2-methyltransferase.